The primary structure comprises 199 residues: 3-isopropylmalate dehydratase small subunit (199 aa).

This sequence belongs to the LeuD family. LeuD type 1 subfamily. In terms of assembly, heterodimer of LeuC and LeuD.

It catalyses the reaction (2R,3S)-3-isopropylmalate = (2S)-2-isopropylmalate. It participates in amino-acid biosynthesis; L-leucine biosynthesis; L-leucine from 3-methyl-2-oxobutanoate: step 2/4. Catalyzes the isomerization between 2-isopropylmalate and 3-isopropylmalate, via the formation of 2-isopropylmaleate. The protein is 3-isopropylmalate dehydratase small subunit of Aeromonas salmonicida (strain A449).